The following is a 130-amino-acid chain: Lysozyme C (130 aa).

Residues 1–130 form the C-type lysozyme domain; it reads KTYERCELAR…VSPWIRDCGL (130 aa). Intrachain disulfides connect Cys-6-Cys-128, Cys-30-Cys-116, Cys-65-Cys-81, and Cys-77-Cys-95. Active-site residues include Glu-35 and Asp-53.

This sequence belongs to the glycosyl hydrolase 22 family. In terms of assembly, monomer.

It is found in the secreted. It carries out the reaction Hydrolysis of (1-&gt;4)-beta-linkages between N-acetylmuramic acid and N-acetyl-D-glucosamine residues in a peptidoglycan and between N-acetyl-D-glucosamine residues in chitodextrins.. Lysozymes have primarily a bacteriolytic function; those in tissues and body fluids are associated with the monocyte-macrophage system and enhance the activity of immunoagents. This Chelonia mydas (Green sea-turtle) protein is Lysozyme C (LYZ).